The following is a 152-amino-acid chain: Deoxyuridine 5'-triphosphate nucleotidohydrolase (152 aa).

Substrate contacts are provided by residues 70-72 (RSG), Asn-83, 87-89 (TID), and Lys-97.

The protein belongs to the dUTPase family. It depends on Mg(2+) as a cofactor.

The enzyme catalyses dUTP + H2O = dUMP + diphosphate + H(+). It participates in pyrimidine metabolism; dUMP biosynthesis; dUMP from dCTP (dUTP route): step 2/2. This enzyme is involved in nucleotide metabolism: it produces dUMP, the immediate precursor of thymidine nucleotides and it decreases the intracellular concentration of dUTP so that uracil cannot be incorporated into DNA. This is Deoxyuridine 5'-triphosphate nucleotidohydrolase from Corynebacterium diphtheriae (strain ATCC 700971 / NCTC 13129 / Biotype gravis).